A 721-amino-acid polypeptide reads, in one-letter code: Glucans biosynthesis glucosyltransferase H (721 aa).

7 helical membrane passes run 54–74 (LIMVATAVLSAAGIYEMYQVL), 85–105 (VVLVLFAALFAWVALSFVSAL), 404–424 (GIGAYLTAPMWLAFLVAGILI), 458–478 (FAGTMGLLILPKLLALLLVLI), 493–513 (FGGVLLETMISALTAPVMMVF), 548–568 (YALPTALGATMAVGAWLVSWP), and 569–589 (LLLWMTPVIVGLLLAIPVALL).

It belongs to the glycosyltransferase 2 family. OpgH subfamily.

The protein resides in the cell inner membrane. Its pathway is glycan metabolism; osmoregulated periplasmic glucan (OPG) biosynthesis. Functionally, involved in the biosynthesis of osmoregulated periplasmic glucans (OPGs). This chain is Glucans biosynthesis glucosyltransferase H, found in Rhodopseudomonas palustris (strain TIE-1).